A 483-amino-acid polypeptide reads, in one-letter code: Matrix metalloproteinase-20 (483 aa).

Residues 1-22 form the signal peptide; it reads MKVLPASGLAVFLIMALKFSTA. A propeptide spanning residues 23–107 is cleaved from the precursor; it reads APSLVAASPR…PRCGVPDVAN (85 aa). A Cysteine switch motif is present at residues 98–105; sequence PRCGVPDV. Cysteine 100 is a Zn(2+) binding site. 3 residues coordinate Ca(2+): glutamate 164, alanine 165, and aspartate 166. 2 residues coordinate Zn(2+): histidine 176 and aspartate 178. Ca(2+)-binding residues include aspartate 183, glycine 184, arginine 186, and threonine 188. Histidine 191 is a binding site for Zn(2+). Ca(2+)-binding residues include glutamate 197, glycine 198, glycine 200, and aspartate 202. Histidine 204 provides a ligand contact to Zn(2+). Residues aspartate 206 and glutamate 209 each contribute to the Ca(2+) site. Position 226 (histidine 226) interacts with Zn(2+). Residue glutamate 227 is part of the active site. Zn(2+) is bound by residues histidine 230 and histidine 236. Hemopexin repeat units follow at residues 293 to 343, 344 to 389, 391 to 439, and 440 to 483; these read PDLC…FPQL, MSNV…GFPR, VQQI…FSGV, and NGQI…WIGC. An intrachain disulfide couples cysteine 296 to cysteine 483.

It belongs to the peptidase M10A family. The cofactor is Zn(2+). Ca(2+) serves as cofactor. Post-translationally, autoactivates at least at the 107-Asn-|-Tyr-108 site. As to expression, expressed specifically in the enamel organ.

It is found in the secreted. The protein resides in the extracellular space. The protein localises to the extracellular matrix. In terms of biological role, degrades amelogenin, the major protein component of the enamel matrix and two of the macromolecules characterizing the cartilage extracellular matrix: aggrecan and the cartilage oligomeric matrix protein (COMP). May play a central role in tooth enamel formation. Cleaves aggrecan at the '360-Asn-|-Phe-361' site. The polypeptide is Matrix metalloproteinase-20 (MMP20) (Homo sapiens (Human)).